Reading from the N-terminus, the 262-residue chain is Inactive snake venom serine proteinase 13 (262 aa).

A signal peptide spans 1–18; sequence MGLIRVLANLLILQLSYA. Positions 19–24 are excised as a propeptide; that stretch reads QKSSEL. Positions 25–250 constitute a Peptidase S1 domain; that stretch reads VIGGDECNIN…HLDWIQSIIA (226 aa). Cystine bridges form between cysteine 31–cysteine 162, cysteine 49–cysteine 65, cysteine 97–cysteine 257, cysteine 141–cysteine 211, cysteine 173–cysteine 190, and cysteine 201–cysteine 226. N-linked (GlcNAc...) asparagine glycans are attached at residues asparagine 78, asparagine 102, and asparagine 153.

The protein belongs to the peptidase S1 family. Snake venom subfamily. In terms of assembly, monomer. Expressed by the venom gland.

The protein resides in the secreted. The sequence is that of Inactive snake venom serine proteinase 13 from Crotalus adamanteus (Eastern diamondback rattlesnake).